The sequence spans 363 residues: Phosrestin-2 (363 aa).

It belongs to the arrestin family.

This Calliphora vicina (Blue blowfly) protein is Phosrestin-2 (ARR1).